Consider the following 256-residue polypeptide: Bialaphos biosynthetic pathway regulatory protein (256 aa).

The HTH luxR-type domain occupies 184–249; sequence ETADAIDVSD…QLGARAAECR (66 aa). A DNA-binding region (H-T-H motif) is located at residues 208–227; it reads DVAMARSLGISTRTLRRVIT.

Functionally, involved in the regulation of the biosynthesis of phosphinothricin tripeptide (PTT), also known as bialaphos (BA), a natural-product antibiotic and potent herbicide. This Streptomyces hygroscopicus protein is Bialaphos biosynthetic pathway regulatory protein (brpA).